The chain runs to 439 residues: Ribosomal protein uS12 methylthiotransferase RimO (439 aa).

In terms of domain architecture, MTTase N-terminal spans 3–113 (HKVGFVSLGC…VVNAVHQHLP (111 aa)). Positions 12, 48, 77, 144, 148, and 151 each coordinate [4Fe-4S] cluster. Residues 130 to 367 (LTPRHYAYLK…MQVQAEISRN (238 aa)) form the Radical SAM core domain. The TRAM domain maps to 370 to 436 (KNKIGSTQTV…DYDLYGDLEY (67 aa)).

Belongs to the methylthiotransferase family. RimO subfamily. The cofactor is [4Fe-4S] cluster.

It localises to the cytoplasm. It catalyses the reaction L-aspartate(89)-[ribosomal protein uS12]-hydrogen + (sulfur carrier)-SH + AH2 + 2 S-adenosyl-L-methionine = 3-methylsulfanyl-L-aspartate(89)-[ribosomal protein uS12]-hydrogen + (sulfur carrier)-H + 5'-deoxyadenosine + L-methionine + A + S-adenosyl-L-homocysteine + 2 H(+). Catalyzes the methylthiolation of an aspartic acid residue of ribosomal protein uS12. The polypeptide is Ribosomal protein uS12 methylthiotransferase RimO (Legionella pneumophila (strain Paris)).